We begin with the raw amino-acid sequence, 311 residues long: MYKQGEPNLWTGRLDSETDPKKFRHFQTVTFEDLSKLEKSSMPSGVGILGYAVDKGVALNKGRIGAKEGPDAIKQAFAGLPDLNQCETLVDYGNVYHDHEELIDTQKEFAMLAAKSIANHRQTFLLGGGHDIAYAQYLATRKVYPTQSIGVINIDAHFDTRAEQESTSGTSFRQILEEDDNTDYLVLGIAQGGNTQSLFDYAKEKKIDYVFADELLNHVSPPIKDMIERFVHEHDVIMFTICMDVIDSAFAPGVSAPAVLGLYPHTVLELAKRIIPSDKVSSVSIAEMNPTYDADNRTAKLVANLVHHFLK.

His-130, Asp-155, His-157, Asp-159, Cys-242, and Asp-244 together coordinate Mn(2+).

The protein belongs to the arginase family. Requires Mn(2+) as cofactor.

It carries out the reaction N-formimidoyl-L-glutamate + H2O = formamide + L-glutamate. It participates in amino-acid degradation; L-histidine degradation into L-glutamate; L-glutamate from N-formimidoyl-L-glutamate (hydrolase route): step 1/1. Functionally, catalyzes the conversion of N-formimidoyl-L-glutamate to L-glutamate and formamide. This chain is Formimidoylglutamase, found in Staphylococcus aureus (strain MSSA476).